A 91-amino-acid polypeptide reads, in one-letter code: Sm-like protein LSM6A (91 aa).

A Sm domain is found at 14-86 (TPADFLKSIR…VLYISTVNMT (73 aa)).

Belongs to the snRNP Sm proteins family. As to quaternary structure, component of the heptameric LSM1-LSM7 complex that forms a seven-membered ring structure with a donut shape. The LSM subunits are arranged in the order LSM1, LSM2, LSM3, LSM6, LSM5, LSM7 and LSM4. Component of the heptameric LSM2-LSM8 complex that forms a seven-membered ring structure with a donut shape. The LSM subunits are arranged in the order LSM8, LSM2, LSM3, LSM6, LSM5, LSM7 and LSM4. LSM6A subunit interacts only with its two neighboring subunits, LSM3A or LSM3B and LSM5. In terms of tissue distribution, expressed in roots, leaves, stems, flowers and siliques.

The protein resides in the cytoplasm. Its subcellular location is the nucleus. In terms of biological role, component of LSM protein complexes, which are involved in RNA processing. Component of the cytoplasmic LSM1-LSM7 complex which is involved in mRNA degradation by promoting decapping and leading to accurate 5'-3' mRNA decay. The cytoplasmic LSM1-LSM7 complex regulates developmental gene expression by the decapping of specific development-related transcripts. Component of the nuclear LSM2-LSM8 complex which is involved splicing nuclear mRNAs. LSM2-LSM8 binds directly to the U6 small nuclear RNAs (snRNAs) and is essential for accurate splicing of selected development-related mRNAs through the stabilization of the spliceosomal U6 snRNA. Plays a critical role in the regulation of development-related gene expression. The chain is Sm-like protein LSM6A from Arabidopsis thaliana (Mouse-ear cress).